The primary structure comprises 289 residues: Diaminopimelate epimerase (289 aa).

Asparagine 13, glutamine 47, and asparagine 67 together coordinate substrate. The active-site Proton donor is cysteine 76. Substrate-binding positions include glycine 77–asparagine 78, asparagine 167, asparagine 200, and glutamate 218–arginine 219. Cysteine 227 functions as the Proton acceptor in the catalytic mechanism. Substrate is bound at residue glycine 228–threonine 229.

The protein belongs to the diaminopimelate epimerase family. As to quaternary structure, homodimer.

The protein localises to the cytoplasm. The catalysed reaction is (2S,6S)-2,6-diaminopimelate = meso-2,6-diaminopimelate. It participates in amino-acid biosynthesis; L-lysine biosynthesis via DAP pathway; DL-2,6-diaminopimelate from LL-2,6-diaminopimelate: step 1/1. Functionally, catalyzes the stereoinversion of LL-2,6-diaminopimelate (L,L-DAP) to meso-diaminopimelate (meso-DAP), a precursor of L-lysine and an essential component of the bacterial peptidoglycan. In Burkholderia vietnamiensis (strain G4 / LMG 22486) (Burkholderia cepacia (strain R1808)), this protein is Diaminopimelate epimerase.